The chain runs to 352 residues: UPF0252 protein MJ1282 (352 aa).

Belongs to the UPF0252 family.

The chain is UPF0252 protein MJ1282 from Methanocaldococcus jannaschii (strain ATCC 43067 / DSM 2661 / JAL-1 / JCM 10045 / NBRC 100440) (Methanococcus jannaschii).